The chain runs to 784 residues: DNA repair and recombination protein RAD54-like (784 aa).

The segment at 2–9 is required for chromatin remodeling, strand pairing activities and coupling of ATPase activity; it reads RRSLAPSQ. Threonine 22 is subject to Phosphothreonine. The 176-residue stretch at 169–344 folds into the Helicase ATP-binding domain; it reads EGKKGNFNGC…FSLVNFVNPE (176 aa). 182–189 lines the ATP pocket; it reads DEMGLGKT. The DEGH box signature appears at 295–298; sequence DEGH. The region spanning 501-658 is the Helicase C-terminal domain; the sequence is LLDFMLATIR…NNESAEKHFT (158 aa). Residues 742–784 are disordered; sequence QAIKESEETKQEAEDTSIPAKSKRKRSTTPESDDCNDEDFKGF. Over residues 745-754 the composition is skewed to basic and acidic residues; the sequence is KESEETKQEA.

It belongs to the SNF2/RAD54 helicase family. In terms of assembly, interacts (via N-terminus) with spn-A/Rad51.

It is found in the nucleus. Its function is as follows. Involved in mitotic DNA repair and meiotic recombination. Functions in the recombinational DNA repair pathway. Essential for interhomolog gene conversion (GC), but may have a less important role in intersister GC than spn-A/Rad51. In the presence of DNA, spn-A/Rad51 enhances the ATPase activity of okr/Rad54. In Drosophila willistoni (Fruit fly), this protein is DNA repair and recombination protein RAD54-like.